Here is a 139-residue protein sequence, read N- to C-terminus: Small ribosomal subunit protein uS12 (139 aa).

Position 102 is a 3-methylthioaspartic acid (D102). A disordered region spans residues 116-139 (DTTGVAKRSQGRSKYGAKRPKKSK). Residues 124-139 (SQGRSKYGAKRPKKSK) show a composition bias toward basic residues.

The protein belongs to the universal ribosomal protein uS12 family. As to quaternary structure, part of the 30S ribosomal subunit. Contacts proteins S8 and S17. May interact with IF1 in the 30S initiation complex.

With S4 and S5 plays an important role in translational accuracy. Functionally, interacts with and stabilizes bases of the 16S rRNA that are involved in tRNA selection in the A site and with the mRNA backbone. Located at the interface of the 30S and 50S subunits, it traverses the body of the 30S subunit contacting proteins on the other side and probably holding the rRNA structure together. The combined cluster of proteins S8, S12 and S17 appears to hold together the shoulder and platform of the 30S subunit. This Mesomycoplasma hyopneumoniae (strain 7448) (Mycoplasma hyopneumoniae) protein is Small ribosomal subunit protein uS12.